Here is a 553-residue protein sequence, read N- to C-terminus: CTP synthase (553 aa).

The segment at 1–266 (MKYIFVTGGV…GKAVEDLLGL (266 aa)) is amidoligase domain. CTP is bound at residue Ser12. Ser12 contacts UTP. Position 13–18 (13–18 (SLGKGV)) interacts with ATP. Tyr53 is an L-glutamine binding site. Residue Asp70 participates in ATP binding. Asp70 and Glu140 together coordinate Mg(2+). Residues 147–149 (DIE), 187–192 (KTKPTQ), and Lys223 contribute to the CTP site. Residues 187–192 (KTKPTQ) and Lys223 each bind UTP. Residues 291–541 (TIAIAGKYTE…VAAALQSGPS (251 aa)) enclose the Glutamine amidotransferase type-1 domain. Residue Gly353 coordinates L-glutamine. Residue Cys380 is the Nucleophile; for glutamine hydrolysis of the active site. Residues 381-384 (LGMQ), Glu404, and Arg464 contribute to the L-glutamine site. Catalysis depends on residues His514 and Glu516.

The protein belongs to the CTP synthase family. In terms of assembly, homotetramer.

It carries out the reaction UTP + L-glutamine + ATP + H2O = CTP + L-glutamate + ADP + phosphate + 2 H(+). The enzyme catalyses L-glutamine + H2O = L-glutamate + NH4(+). The catalysed reaction is UTP + NH4(+) + ATP = CTP + ADP + phosphate + 2 H(+). It participates in pyrimidine metabolism; CTP biosynthesis via de novo pathway; CTP from UDP: step 2/2. Its activity is regulated as follows. Allosterically activated by GTP, when glutamine is the substrate; GTP has no effect on the reaction when ammonia is the substrate. The allosteric effector GTP functions by stabilizing the protein conformation that binds the tetrahedral intermediate(s) formed during glutamine hydrolysis. Inhibited by the product CTP, via allosteric rather than competitive inhibition. In terms of biological role, catalyzes the ATP-dependent amination of UTP to CTP with either L-glutamine or ammonia as the source of nitrogen. Regulates intracellular CTP levels through interactions with the four ribonucleotide triphosphates. The sequence is that of CTP synthase from Deinococcus geothermalis (strain DSM 11300 / CIP 105573 / AG-3a).